The following is a 207-amino-acid chain: MSRILLTGFEPFGGEKVNPSELAVKQLEGKTIAGLEVVAGVLPVVTVKCIDEAVKLIEKYEPVAVLNVGQAGGRVELSIEKVAINVKDYRIPDNEGNQIRYAPVVEGGPDAYFATIPVEKIADSLVEKVIPASVSYTAGTYCCNEVFYGVSHYLRNNKPGVLNGFIHIPFILEQAAGAKPPRASMPLEVIVKGLEIAVEVVAEGLEK.

Active-site residues include Glu-80, Cys-143, and His-167.

The protein belongs to the peptidase C15 family. As to quaternary structure, homotetramer.

The protein resides in the cytoplasm. The catalysed reaction is Release of an N-terminal pyroglutamyl group from a polypeptide, the second amino acid generally not being Pro.. Functionally, removes 5-oxoproline from various penultimate amino acid residues except L-proline. The protein is Pyrrolidone-carboxylate peptidase of Coprothermobacter proteolyticus (strain ATCC 35245 / DSM 5265 / OCM 4 / BT).